The primary structure comprises 435 residues: Methylenetetrahydrofolate--tRNA-(uracil-5-)-methyltransferase TrmFO (435 aa).

Gly-7–Gly-12 contributes to the FAD binding site.

This sequence belongs to the MnmG family. TrmFO subfamily. Requires FAD as cofactor.

The protein localises to the cytoplasm. It catalyses the reaction uridine(54) in tRNA + (6R)-5,10-methylene-5,6,7,8-tetrahydrofolate + NADH + H(+) = 5-methyluridine(54) in tRNA + (6S)-5,6,7,8-tetrahydrofolate + NAD(+). It carries out the reaction uridine(54) in tRNA + (6R)-5,10-methylene-5,6,7,8-tetrahydrofolate + NADPH + H(+) = 5-methyluridine(54) in tRNA + (6S)-5,6,7,8-tetrahydrofolate + NADP(+). Functionally, catalyzes the folate-dependent formation of 5-methyl-uridine at position 54 (M-5-U54) in all tRNAs. This is Methylenetetrahydrofolate--tRNA-(uracil-5-)-methyltransferase TrmFO from Thermotoga petrophila (strain ATCC BAA-488 / DSM 13995 / JCM 10881 / RKU-1).